The primary structure comprises 260 residues: tRNA pseudouridine synthase A (260 aa).

The active-site Nucleophile is Asp51. Tyr109 contributes to the substrate binding site.

Belongs to the tRNA pseudouridine synthase TruA family. As to quaternary structure, homodimer.

It carries out the reaction uridine(38/39/40) in tRNA = pseudouridine(38/39/40) in tRNA. In terms of biological role, formation of pseudouridine at positions 38, 39 and 40 in the anticodon stem and loop of transfer RNAs. In Methylibium petroleiphilum (strain ATCC BAA-1232 / LMG 22953 / PM1), this protein is tRNA pseudouridine synthase A.